The primary structure comprises 393 residues: NAD(P)H-quinone oxidoreductase subunit H, chloroplastic (393 aa).

It belongs to the complex I 49 kDa subunit family. NDH is composed of at least 16 different subunits, 5 of which are encoded in the nucleus.

It is found in the plastid. Its subcellular location is the chloroplast thylakoid membrane. It carries out the reaction a plastoquinone + NADH + (n+1) H(+)(in) = a plastoquinol + NAD(+) + n H(+)(out). It catalyses the reaction a plastoquinone + NADPH + (n+1) H(+)(in) = a plastoquinol + NADP(+) + n H(+)(out). In terms of biological role, NDH shuttles electrons from NAD(P)H:plastoquinone, via FMN and iron-sulfur (Fe-S) centers, to quinones in the photosynthetic chain and possibly in a chloroplast respiratory chain. The immediate electron acceptor for the enzyme in this species is believed to be plastoquinone. Couples the redox reaction to proton translocation, and thus conserves the redox energy in a proton gradient. The polypeptide is NAD(P)H-quinone oxidoreductase subunit H, chloroplastic (Nandina domestica (Heavenly bamboo)).